The following is a 203-amino-acid chain: MRGTLYIVAAPSGAGKSSIVNATLARDPKIALSISFTSRAPRPGERHAEHYHFVSADEFQGMIEAGDFFEYALVHGDWKGTARQSVEPQLAAGHDVLLEIDWQGARQVRQKVPDAVSVFILPPSRQALDERMRKRGQDSEDVMAQRLAAAREEMLHFEEFDYVIINETFDIAVAEMCAIFTASRLRRQAQQQRHAGLIQALLE.

In terms of domain architecture, Guanylate kinase-like spans 3 to 181; the sequence is GTLYIVAAPS…AVAEMCAIFT (179 aa). 10–17 is an ATP binding site; sequence APSGAGKS.

Belongs to the guanylate kinase family.

Its subcellular location is the cytoplasm. The enzyme catalyses GMP + ATP = GDP + ADP. Essential for recycling GMP and indirectly, cGMP. The protein is Guanylate kinase of Xanthomonas euvesicatoria pv. vesicatoria (strain 85-10) (Xanthomonas campestris pv. vesicatoria).